The primary structure comprises 440 residues: F-box protein pof12 (440 aa).

The F-box domain maps to 8–54 (KNPASIFSHETLLHVLNDLSAHDLAALERVSRSWNSIVRRSSVWHNL).

As to quaternary structure, interacts with skp1.

Its subcellular location is the nucleus. The sequence is that of F-box protein pof12 (pof12) from Schizosaccharomyces pombe (strain 972 / ATCC 24843) (Fission yeast).